Here is a 379-residue protein sequence, read N- to C-terminus: Tryptophan 2,3-dioxygenase (379 aa).

Substrate is bound by residues 57–61 (FIITH) and Arg-128. His-312 serves as a coordination point for heme. Residue Thr-327 coordinates substrate.

It belongs to the tryptophan 2,3-dioxygenase family. Homotetramer. Dimer of dimers. Heme serves as cofactor.

The enzyme catalyses L-tryptophan + O2 = N-formyl-L-kynurenine. It functions in the pathway amino-acid degradation; L-tryptophan degradation via kynurenine pathway; L-kynurenine from L-tryptophan: step 1/2. It participates in pigment biosynthesis; ommochrome biosynthesis. In terms of biological role, heme-dependent dioxygenase that catalyzes the oxidative cleavage of the L-tryptophan (L-Trp) pyrrole ring and converts L-tryptophan to N-formyl-L-kynurenine. Catalyzes the oxidative cleavage of the indole moiety. In Drosophila erecta (Fruit fly), this protein is Tryptophan 2,3-dioxygenase.